A 124-amino-acid polypeptide reads, in one-letter code: Large ribosomal subunit protein bL36m (124 aa).

Belongs to the bacterial ribosomal protein bL36 family. Component of the mitochondrial large ribosomal subunit (mt-LSU). Mature N.crassa 74S mitochondrial ribosomes consist of a small (37S) and a large (54S) subunit. The 37S small subunit contains a 16S ribosomal RNA (16S mt-rRNA) and 32 different proteins. The 54S large subunit contains a 23S rRNA (23S mt-rRNA) and 42 different proteins. bL36m has a zinc binding site.

The protein localises to the mitochondrion. Its function is as follows. Component of the mitochondrial ribosome (mitoribosome), a dedicated translation machinery responsible for the synthesis of mitochondrial genome-encoded proteins, including at least some of the essential transmembrane subunits of the mitochondrial respiratory chain. The mitoribosomes are attached to the mitochondrial inner membrane and translation products are cotranslationally integrated into the membrane. The polypeptide is Large ribosomal subunit protein bL36m (rtc6) (Neurospora crassa (strain ATCC 24698 / 74-OR23-1A / CBS 708.71 / DSM 1257 / FGSC 987)).